We begin with the raw amino-acid sequence, 308 residues long: Ribosomal RNA large subunit methyltransferase F (308 aa).

It belongs to the methyltransferase superfamily. METTL16/RlmF family.

The protein localises to the cytoplasm. It catalyses the reaction adenosine(1618) in 23S rRNA + S-adenosyl-L-methionine = N(6)-methyladenosine(1618) in 23S rRNA + S-adenosyl-L-homocysteine + H(+). Specifically methylates the adenine in position 1618 of 23S rRNA. This chain is Ribosomal RNA large subunit methyltransferase F, found in Escherichia coli (strain SMS-3-5 / SECEC).